A 62-amino-acid chain; its full sequence is uncharacterized protein (62 aa).

The protein belongs to the asfivirus C62L family.

This is an uncharacterized protein from African swine fever virus (isolate Tick/South Africa/Pretoriuskop Pr4/1996) (ASFV).